A 238-amino-acid polypeptide reads, in one-letter code: 7-cyano-7-deazaguanine synthase (238 aa).

10 to 20 (LSGGLDSSTVL) is a binding site for ATP. 4 residues coordinate Zn(2+): C190, C198, C201, and C204.

Belongs to the QueC family. Zn(2+) serves as cofactor.

The enzyme catalyses 7-carboxy-7-deazaguanine + NH4(+) + ATP = 7-cyano-7-deazaguanine + ADP + phosphate + H2O + H(+). It functions in the pathway purine metabolism; 7-cyano-7-deazaguanine biosynthesis. In terms of biological role, catalyzes the ATP-dependent conversion of 7-carboxy-7-deazaguanine (CDG) to 7-cyano-7-deazaguanine (preQ(0)). This is 7-cyano-7-deazaguanine synthase from Thermoplasma acidophilum (strain ATCC 25905 / DSM 1728 / JCM 9062 / NBRC 15155 / AMRC-C165).